A 189-amino-acid polypeptide reads, in one-letter code: Apolipoprotein D (189 aa).

A signal peptide spans Met-1–Gly-20. Gln-21 is subject to Pyrrolidone carboxylic acid. Intrachain disulfides connect Cys-28–Cys-134 and Cys-61–Cys-185. Residues Asn-65 and Asn-98 are each glycosylated (N-linked (GlcNAc...) asparagine).

The protein belongs to the calycin superfamily. Lipocalin family. Homodimer.

The protein resides in the secreted. Functionally, APOD occurs in the macromolecular complex with lecithin-transport and binding of bilin. Appears to be able to transport a variety of ligands in a number of different contexts. In Cavia porcellus (Guinea pig), this protein is Apolipoprotein D (APOD).